Consider the following 53-residue polypeptide: Large ribosomal subunit protein uL30 (53 aa).

The protein belongs to the universal ribosomal protein uL30 family. In terms of assembly, part of the 50S ribosomal subunit.

The sequence is that of Large ribosomal subunit protein uL30 from Deinococcus geothermalis (strain DSM 11300 / CIP 105573 / AG-3a).